Reading from the N-terminus, the 90-residue chain is MVKNSIIPVISQEKKEKNPGSVEFQIFKFTDRIRRLTSHFELHRKDYLSQRGLRKILGKRQRLLSYLSKKDRIRYKKLINQFDIRESQIR.

This sequence belongs to the universal ribosomal protein uS15 family. Part of the 30S ribosomal subunit.

Its subcellular location is the plastid. It is found in the chloroplast. The chain is Small ribosomal subunit protein uS15c (rps15) from Glycine max (Soybean).